A 342-amino-acid chain; its full sequence is C-X-C chemokine receptor type 6 (342 aa).

At 1-32 (MAEYDHYEDNGFNSFNDSSQEEHQDFLQFSKV) the chain is on the extracellular side. N-linked (GlcNAc...) asparagine glycosylation is present at N16. Residues 33 to 59 (FLPCMYLVVFVCGLVGNSLVLVISIFY) traverse the membrane as a helical segment. The Cytoplasmic portion of the chain corresponds to 60–68 (HKLQSLTDV). Residues 69-89 (FLVNLPLADLVFVCTLPFWAY) form a helical membrane-spanning segment. At 90-103 (AGIHEWIFGQVMCK) the chain is on the extracellular side. C102 and C180 form a disulfide bridge. A helical membrane pass occupies residues 104–125 (TLLGIYTINFYTSMLILTCITV). Topologically, residues 126–143 (DRFIVVVKATKAYNQQAK) are cytoplasmic. The chain crosses the membrane as a helical span at residues 144–164 (KMTWGKVICLLIWVISLLVSL). The Extracellular portion of the chain corresponds to 165 to 187 (PQIIYGNVFNLDKLICGYHDEEI). The chain crosses the membrane as a helical span at residues 188 to 215 (STVVLATQMTLGFFLPLLAMIVCYSVII). Residues 216–231 (KTLLHAGGFQKHRSLK) are Cytoplasmic-facing. The chain crosses the membrane as a helical span at residues 232–259 (IIFLVMAVFLLTQTPFNLVKLIRSTHWE). Topologically, residues 260 to 275 (YYAMTSFHYTIIVTEA) are extracellular. A helical membrane pass occupies residues 276 to 293 (IAYLRACLNPVLYAFVSL). The Cytoplasmic portion of the chain corresponds to 294 to 342 (KFRKNFWKLVKDIGCLPYLGVSHQWKSSEDNSKTFSASHNVEATSMFQL).

The protein belongs to the G-protein coupled receptor 1 family.

It is found in the cell membrane. In terms of biological role, receptor for the C-X-C chemokine CXCL16. Used as a coreceptor by SIVs and by strains of HIV-2 and m-tropic HIV-1. In Chlorocebus aethiops (Green monkey), this protein is C-X-C chemokine receptor type 6 (CXCR6).